The sequence spans 128 residues: uncharacterized protein (128 aa).

3 consecutive transmembrane segments (helical) span residues 13–35 (FQMA…VFFV), 42–64 (IIAL…YNGG), and 90–112 (LVLT…SIIL).

Its subcellular location is the cell membrane. This is an uncharacterized protein from Methanocaldococcus jannaschii (strain ATCC 43067 / DSM 2661 / JAL-1 / JCM 10045 / NBRC 100440) (Methanococcus jannaschii).